A 356-amino-acid polypeptide reads, in one-letter code: tRNA N6-adenosine threonylcarbamoyltransferase (356 aa).

Residues H115 and H119 each contribute to the Fe cation site. Substrate-binding positions include 138–142 (LVSGG), D171, G184, and N283. D311 is a binding site for Fe cation.

Belongs to the KAE1 / TsaD family. It depends on Fe(2+) as a cofactor.

The protein localises to the cytoplasm. The catalysed reaction is L-threonylcarbamoyladenylate + adenosine(37) in tRNA = N(6)-L-threonylcarbamoyladenosine(37) in tRNA + AMP + H(+). Required for the formation of a threonylcarbamoyl group on adenosine at position 37 (t(6)A37) in tRNAs that read codons beginning with adenine. Is involved in the transfer of the threonylcarbamoyl moiety of threonylcarbamoyl-AMP (TC-AMP) to the N6 group of A37, together with TsaE and TsaB. TsaD likely plays a direct catalytic role in this reaction. In Prochlorococcus marinus subsp. pastoris (strain CCMP1986 / NIES-2087 / MED4), this protein is tRNA N6-adenosine threonylcarbamoyltransferase.